Reading from the N-terminus, the 501-residue chain is MAFLEFNNVSKGYPGVQALANVSFTVEKGVVHGLMGENGAGKSTLIRVLSGDQAADGGNIFIDGEEQKYTSVRDAFHAGIVVIHQELQLVPELTVAENLWLGRFPAKGGIIHLKTLIETVRAKLEEIGIDVDPSTKVSSLSIGARQMIEIAKAVMLDARVIALDEPTSSLSSRESEILFSLIARLKARGAVILYVSHRLDEIFRLCDSLTVLRDGKLAAHHPKIAETTREQIISEMVGREISNVWGWRERALGDNRLEVKGLSGPRLHTPISFSVRQGEILGFFGLIGAGRSEMARLLYGADARHRGEVTIDGVAVSPNNPKVAIKAGMVLCPEDRKFDGIVQGRSIEENIAISSRRHFSRFGILKPKTEAAQADRFIAKLRVRTPSRRQDIVNLSGGNQQKVILGRWLSEQGIKVLVIDEPTRGIDVGAKSEIYDILYELAAGGVAIVVISSELPEVMGICDRIIVMCQGRVAANVARPDFDERSILTAALPDKNAAGSI.

2 consecutive ABC transporter domains span residues Leu4–Arg239 and Leu252–Lys495. Gly36–Ser43 provides a ligand contact to ATP.

It belongs to the ABC transporter superfamily. Arabinose importer (TC 3.A.1.2.2) family. The complex is composed of two ATP-binding proteins (AraG), two transmembrane proteins (AraH) and a solute-binding protein (AraF).

The protein resides in the cell inner membrane. The enzyme catalyses L-arabinose(out) + ATP + H2O = L-arabinose(in) + ADP + phosphate + H(+). In terms of biological role, part of the ABC transporter complex AraFGH involved in arabinose import. Responsible for energy coupling to the transport system. The polypeptide is Arabinose import ATP-binding protein AraG (Rhizobium etli (strain ATCC 51251 / DSM 11541 / JCM 21823 / NBRC 15573 / CFN 42)).